A 294-amino-acid polypeptide reads, in one-letter code: S-adenosylmethionine uptake transporter (294 aa).

Helical transmembrane passes span 8–28 (YLTGIGWFLLSLVSSSANDVI), 41–61 (VAFFRFFFSSIVLLPFVVYYG), 74–91 (ILRGLLLFFGMTSWTYGL), 98–118 (TATVVSFSIPLFTLILAVFFL), 121–141 (NIIWPRWVVTVVGFIGLVVTL), 148–168 (FNPEILYFVLAAISFAMLDII), 177–197 (SMISMLFYSAIVTAIVSLPVA), 207–227 (FELALLFVLGSSGSLILFFLL), 237–257 (ATAPYRYLELVISVIAAYFIF), and 260–280 (FPDKSTLHGAVIIIPTTLFII). EamA domains are found at residues 21 to 141 (SSSA…VVTL) and 160 to 280 (ISFA…LFII).

Belongs to the drug/metabolite transporter (DMT) superfamily. 10 TMS drug/metabolite exporter (DME) (TC 2.A.7.3) family.

It is found in the cell inner membrane. Transports S-adenosylmethionine. The protein is S-adenosylmethionine uptake transporter (sam) of Rickettsia conorii (strain ATCC VR-613 / Malish 7).